A 94-amino-acid polypeptide reads, in one-letter code: Non-specific lipid-transfer protein 1 (94 aa).

4 disulfide bridges follow: C4/C53, C14/C30, C31/C76, and C51/C90.

Functionally, plant non-specific lipid-transfer proteins transfer phospholipids as well as galactolipids across membranes. May play a role in wax or cutin deposition in the cell walls of expanding epidermal cells and certain secretory tissues. This chain is Non-specific lipid-transfer protein 1, found in Amaranthus hypochondriacus (Prince-of-Wales feather).